We begin with the raw amino-acid sequence, 165 residues long: Small ribosomal subunit protein bS16 (165 aa).

It belongs to the bacterial ribosomal protein bS16 family.

The protein is Small ribosomal subunit protein bS16 of Azobacteroides pseudotrichonymphae genomovar. CFP2.